Reading from the N-terminus, the 23-residue chain is MKYFFMGISFMVIVWAGTFALMI.

Residues 3–23 (YFFMGISFMVIVWAGTFALMI) form a helical membrane-spanning segment.

It localises to the cell inner membrane. This is an uncharacterized protein from Escherichia coli (strain K12).